The sequence spans 150 residues: 3-dehydroquinate dehydratase (150 aa).

Catalysis depends on tyrosine 23, which acts as the Proton acceptor. Residues asparagine 79, histidine 85, and aspartate 92 each coordinate substrate. The active-site Proton donor is histidine 105. Substrate contacts are provided by residues 106 to 107 (IS) and arginine 116.

This sequence belongs to the type-II 3-dehydroquinase family. In terms of assembly, homododecamer.

It carries out the reaction 3-dehydroquinate = 3-dehydroshikimate + H2O. It functions in the pathway metabolic intermediate biosynthesis; chorismate biosynthesis; chorismate from D-erythrose 4-phosphate and phosphoenolpyruvate: step 3/7. Functionally, catalyzes a trans-dehydration via an enolate intermediate. This is 3-dehydroquinate dehydratase from Marinomonas sp. (strain MWYL1).